An 853-amino-acid chain; its full sequence is Dynamin-A (853 aa).

Residues 22 to 296 (PLDLPQIVVV…LMFHIRDTLP (275 aa)) enclose the Dynamin-type G domain. A G1 motif region spans residues 32 to 39 (GSQSSGKS). Residue 32 to 40 (GSQSSGKSS) participates in GTP binding. The interval 58–60 (VTR) is G2 motif. Residues 138 to 141 (DLPG) are G3 motif. The segment at 207–210 (TKLD) is G4 motif. GTP contacts are provided by residues 207–213 (TKLDLMD) and 238–241 (NRSQ). The interval 237–240 (INRS) is G5 motif. Low complexity-rich tracts occupy residues 523–569 (DQYQ…QQNQ) and 590–607 (PAQQQPNQQPNQLNKGPQ). The segment at 523-738 (DQYQQQQQQQ…RYQDDFYGRG (216 aa)) is disordered. Residues 610–624 (PPNQSKPSSIPQNGP) are compositionally biased toward polar residues. 2 stretches are compositionally biased toward low complexity: residues 625 to 635 (NNNNNNNNNNN) and 664 to 728 (NNSN…SSYN). Residues 762–853 (TELIRELLIS…IINEIRDFRN (92 aa)) form the GED domain.

Belongs to the TRAFAC class dynamin-like GTPase superfamily. Dynamin/Fzo/YdjA family.

The protein localises to the cytoplasm. Function in membrane trafficking processes along the endo-lysosomal pathway. The protein is Dynamin-A (dymA) of Dictyostelium discoideum (Social amoeba).